We begin with the raw amino-acid sequence, 245 residues long: Eukaryotic translation initiation factor 6 (245 aa).

Belongs to the eIF-6 family. In terms of assembly, monomer. Associates with the 60S ribosomal subunit.

The protein resides in the cytoplasm. Its subcellular location is the nucleus. The protein localises to the nucleolus. Binds to the 60S ribosomal subunit and prevents its association with the 40S ribosomal subunit to form the 80S initiation complex in the cytoplasm. May also be involved in ribosome biogenesis. This is Eukaryotic translation initiation factor 6 from Drosophila melanogaster (Fruit fly).